We begin with the raw amino-acid sequence, 329 residues long: Delta-aminolevulinic acid dehydratase (329 aa).

Residue Lys202 is the Schiff-base intermediate with substrate of the active site. 5-aminolevulinate is bound by residues Arg212 and Arg223. Glu239 contributes to the Mg(2+) binding site. The active-site Schiff-base intermediate with substrate is the Lys254. Ser280 and Tyr319 together coordinate 5-aminolevulinate.

The protein belongs to the ALAD family. In terms of assembly, homooctamer.

The enzyme catalyses 2 5-aminolevulinate = porphobilinogen + 2 H2O + H(+). The protein operates within porphyrin-containing compound metabolism; protoporphyrin-IX biosynthesis; coproporphyrinogen-III from 5-aminolevulinate: step 1/4. Its function is as follows. Catalyzes an early step in the biosynthesis of tetrapyrroles. Binds two molecules of 5-aminolevulinate per subunit, each at a distinct site, and catalyzes their condensation to form porphobilinogen. The protein is Delta-aminolevulinic acid dehydratase (hemB) of Mycobacterium tuberculosis (strain CDC 1551 / Oshkosh).